A 347-amino-acid polypeptide reads, in one-letter code: MTRSIDLAVVAGDGIGPEVVAEGLKVLDAALAGTDVTVRTTAYDLGAARWHATGETLTDEDLAALAQHDAILLGAIGDPGVPSGVLERGLLLKLRFAFDHYVNLRPSRLYPGVATPLAKGGDVDFVVVREGTEGPYVGNGGAIRVGTPHEIANEVSVNTAFGVERVVRDAFARADARPRKKLTLVHKHNVLVHAGHLWRRTVEAVGAEFPDVAVDYLHVDAATIFLVTDPARFDVVVTDNLFGDILTDLAAAITGGIGLAASGNINPDRAFPSMFEPVHGSAPDIAGQGKADPTATVLSVALLLEHLGLTEQAARITAAVESDIVERGSAVRSTAEVGDALAARVAG.

Residues arginine 95, arginine 105, arginine 129, and aspartate 220 each contribute to the substrate site. Residues aspartate 220, aspartate 244, and aspartate 248 each contribute to the Mg(2+) site. 280-292 (GSAPDIAGQGKAD) is a binding site for NAD(+).

It belongs to the isocitrate and isopropylmalate dehydrogenases family. LeuB type 2 subfamily. As to quaternary structure, homodimer. Requires Mg(2+) as cofactor. Mn(2+) is required as a cofactor.

The protein localises to the cytoplasm. The catalysed reaction is (2R,3S)-3-isopropylmalate + NAD(+) = 4-methyl-2-oxopentanoate + CO2 + NADH. The protein operates within amino-acid biosynthesis; L-leucine biosynthesis; L-leucine from 3-methyl-2-oxobutanoate: step 3/4. In terms of biological role, catalyzes the oxidation of 3-carboxy-2-hydroxy-4-methylpentanoate (3-isopropylmalate) to 3-carboxy-4-methyl-2-oxopentanoate. The product decarboxylates to 4-methyl-2 oxopentanoate. The sequence is that of 3-isopropylmalate dehydrogenase from Beutenbergia cavernae (strain ATCC BAA-8 / DSM 12333 / CCUG 43141 / JCM 11478 / NBRC 16432 / NCIMB 13614 / HKI 0122).